Reading from the N-terminus, the 2542-residue chain is Talin-2 (2542 aa).

The FERM domain occupies 88–406; it reads RPQKIRMLDG…GYIDIILKKK (319 aa). Residues 312–406 are interaction with PIP5K1C; the sequence is GVSFFLVKEK…GYIDIILKKK (95 aa). 4 positions are modified to phosphoserine: S428, S449, S623, and S1023. A Phosphotyrosine modification is found at Y1665. T1843 bears the Phosphothreonine mark. Positions 2294-2533 constitute an I/LWEQ domain; sequence TEWVDPEDPT…QIRQQQYKFL (240 aa).

In terms of assembly, interacts directly with PIP5K1C.

The protein resides in the cytoplasm. Its subcellular location is the cell junction. The protein localises to the focal adhesion. It localises to the synapse. It is found in the cell membrane. The protein resides in the cytoskeleton. Functionally, as a major component of focal adhesion plaques that links integrin to the actin cytoskeleton, may play an important role in cell adhesion. Recruits PIP5K1C to focal adhesion plaques and strongly activates its kinase activity. In Homo sapiens (Human), this protein is Talin-2 (TLN2).